Reading from the N-terminus, the 309-residue chain is Protein FdhE homolog (309 aa).

Belongs to the FdhE family.

It localises to the cytoplasm. In terms of biological role, necessary for formate dehydrogenase activity. This is Protein FdhE homolog from Pasteurella multocida (strain Pm70).